The primary structure comprises 70 residues: Large ribosomal subunit protein eL38 (70 aa).

The protein belongs to the eukaryotic ribosomal protein eL38 family.

The chain is Large ribosomal subunit protein eL38 (RpL38) from Julodis onopordi (Jewel beetle).